The primary structure comprises 146 residues: Ankyrin repeat-containing protein P16F5.05c (146 aa).

4 ANK repeats span residues 1 to 31 (MDVDDLIYACRAADEELLDEIIEKCPQELSR), 35 to 64 (NGNSGLHMASANGHIAVVQKIIPYLNKEVI), 70 to 99 (SGNTAMHWAALNGHAEICKLLLEAGGDPHI), and 103 to 132 (YEKSPIYEADIRNQQKVMDLFLDFEIAKGS).

It localises to the cytoplasm. It is found in the nucleus. The polypeptide is Ankyrin repeat-containing protein P16F5.05c (Schizosaccharomyces pombe (strain 972 / ATCC 24843) (Fission yeast)).